The primary structure comprises 160 residues: Non-secretory ribonuclease (160 aa).

An N-terminal signal peptide occupies residues 1-27; that stretch reads MVPKLFTSPICLLLLLGLMGVEGSLHA. A glycan (C-linked (Man) tryptophan) is linked at W34. H42 (proton acceptor) is an active-site residue. A glycan (N-linked (GlcNAc...) asparagine) is linked at N44. Cystine bridges form between C50–C110, C64–C122, C82–C137, and C89–C98. 3'-nitrotyrosine is present on Y60. 65 to 69 provides a ligand contact to substrate; the sequence is KNQNT. Residues N92, N111, and N138 are each glycosylated (N-linked (GlcNAc...) asparagine). H155 serves as the catalytic Proton donor.

Belongs to the pancreatic ribonuclease family. As to quaternary structure, interacts with and forms a tight 1:1 complex with RNH1. Dimerization of two such complexes may occur.

Its subcellular location is the lysosome. The protein localises to the cytoplasmic granule. The catalysed reaction is an [RNA] containing cytidine + H2O = an [RNA]-3'-cytidine-3'-phosphate + a 5'-hydroxy-ribonucleotide-3'-[RNA].. It carries out the reaction an [RNA] containing uridine + H2O = an [RNA]-3'-uridine-3'-phosphate + a 5'-hydroxy-ribonucleotide-3'-[RNA].. This is a non-secretory ribonuclease. It is a pyrimidine specific nuclease with a slight preference for U. Cytotoxin and helminthotoxin. Possesses a wide variety of biological activities. This is Non-secretory ribonuclease (RNASE2) from Macaca nemestrina (Pig-tailed macaque).